Here is a 62-residue protein sequence, read N- to C-terminus: Small ribosomal subunit protein uS14 (62 aa).

Zn(2+) is bound by residues Cys-25, Cys-28, Cys-41, and Cys-44.

This sequence belongs to the universal ribosomal protein uS14 family. Zinc-binding uS14 subfamily. Part of the 30S ribosomal subunit. Contacts proteins S3 and S10. Zn(2+) is required as a cofactor.

Binds 16S rRNA, required for the assembly of 30S particles and may also be responsible for determining the conformation of the 16S rRNA at the A site. This is Small ribosomal subunit protein uS14 from Hydrogenobaculum sp. (strain Y04AAS1).